The following is a 107-amino-acid chain: uncharacterized protein (107 aa).

The chain crosses the membrane as a helical span at residues 25-42; that stretch reads LSLCSVLLSWLICAMCLW.

It localises to the host membrane. This is an uncharacterized protein from Galliformes (FAdV-1).